A 53-amino-acid polypeptide reads, in one-letter code: UPF0391 membrane protein YPTS_0599 (53 aa).

Transmembrane regions (helical) follow at residues 4–24 and 27–47; these read WGII…GGLA and AAWA…ISLF.

The protein belongs to the UPF0391 family.

Its subcellular location is the cell membrane. In Yersinia pseudotuberculosis serotype IB (strain PB1/+), this protein is UPF0391 membrane protein YPTS_0599.